Here is a 319-residue protein sequence, read N- to C-terminus: Cytochrome c biogenesis protein CcsA (319 aa).

8 helical membrane-spanning segments follow: residues Ala-14–Ile-34, Gly-36–Leu-56, Ser-69–Ile-89, Leu-97–Leu-117, Ile-142–Ile-162, Thr-227–Asn-247, Trp-254–Leu-274, and Ala-288–Leu-308.

Belongs to the CcmF/CycK/Ccl1/NrfE/CcsA family. May interact with Ccs1.

The protein resides in the plastid. It is found in the chloroplast thylakoid membrane. Required during biogenesis of c-type cytochromes (cytochrome c6 and cytochrome f) at the step of heme attachment. This is Cytochrome c biogenesis protein CcsA from Pyropia yezoensis (Susabi-nori).